Reading from the N-terminus, the 255-residue chain is Triosephosphate isomerase (255 aa).

9-11 provides a ligand contact to substrate; sequence NWK. The Electrophile role is filled by histidine 95. Residue glutamate 167 is the Proton acceptor of the active site. Substrate contacts are provided by residues glycine 173, serine 212, and 233 to 234; that span reads GG.

Belongs to the triosephosphate isomerase family. In terms of assembly, homodimer.

The protein resides in the cytoplasm. It catalyses the reaction D-glyceraldehyde 3-phosphate = dihydroxyacetone phosphate. It functions in the pathway carbohydrate biosynthesis; gluconeogenesis. The protein operates within carbohydrate degradation; glycolysis; D-glyceraldehyde 3-phosphate from glycerone phosphate: step 1/1. Functionally, involved in the gluconeogenesis. Catalyzes stereospecifically the conversion of dihydroxyacetone phosphate (DHAP) to D-glyceraldehyde-3-phosphate (G3P). This Sodalis glossinidius (strain morsitans) protein is Triosephosphate isomerase.